The chain runs to 257 residues: 5'-nucleotidase SurE (257 aa).

Residues aspartate 11, aspartate 12, serine 42, and asparagine 99 each coordinate a divalent metal cation.

The protein belongs to the SurE nucleotidase family. It depends on a divalent metal cation as a cofactor.

The protein resides in the cytoplasm. The catalysed reaction is a ribonucleoside 5'-phosphate + H2O = a ribonucleoside + phosphate. In terms of biological role, nucleotidase that shows phosphatase activity on nucleoside 5'-monophosphates. In Flavobacterium psychrophilum (strain ATCC 49511 / DSM 21280 / CIP 103535 / JIP02/86), this protein is 5'-nucleotidase SurE.